We begin with the raw amino-acid sequence, 544 residues long: Protein anon-37Cs (544 aa).

The protein localises to the cytoplasm. Has a non-vital function. The sequence is that of Protein anon-37Cs (anon-37Cs) from Drosophila lebanonensis (Fruit fly).